The chain runs to 233 residues: uncharacterized protein (233 aa).

It belongs to the asfivirus H233R family.

This is an uncharacterized protein from African swine fever virus (strain Badajoz 1971 Vero-adapted) (Ba71V).